We begin with the raw amino-acid sequence, 107 residues long: Putative double-stranded DNA mimic protein HSM_1473 (107 aa).

It belongs to the putative dsDNA mimic protein family.

In terms of biological role, may act as a double-stranded DNA (dsDNA) mimic. Probably regulates the activity of a dsDNA-binding protein. This chain is Putative double-stranded DNA mimic protein HSM_1473, found in Histophilus somni (strain 2336) (Haemophilus somnus).